The chain runs to 265 residues: Aquaporin-5 (265 aa).

The Cytoplasmic portion of the chain corresponds to M1 to K12. Residues A13–L33 traverse the membrane as a helical segment. The Extracellular portion of the chain corresponds to K34 to L39. A helical transmembrane segment spans residues P40–L60. Residues G61–G65 are Cytoplasmic-facing. An intramembrane region (discontinuously helical) is located at residues G66 to L74. The NPA 1 motif lies at N69–A71. Over A75–A87 the chain is Cytoplasmic. The chain crosses the membrane as a helical span at residues F88–V108. The Extracellular portion of the chain corresponds to A109–T126. N-linked (GlcNAc...) asparagine glycans are attached at residues N124 and N125. A helical membrane pass occupies residues T127–F147. Over A148–V158 the chain is Cytoplasmic. Residues G159 to F179 traverse the membrane as a helical segment. T180 is a topological domain (extracellular). An intramembrane region (discontinuously helical) is located at residues G181–G191. The NPA 2 motif lies at N185–A187. Residues P192–H203 lie on the Extracellular side of the membrane. The helical transmembrane segment at W204–L224 threads the bilayer. The Cytoplasmic segment spans residues L225–R265.

It belongs to the MIP/aquaporin (TC 1.A.8) family. In terms of assembly, homotetramer; each monomer provides an independent water pore. Interacts with TRPV4; the interaction is probably indirect and regulates TRPV4 activation by hypotonicity. Detected in skin eccrine sweat glands, at the apical cell membrane and at intercellular canaliculi (at protein level).

The protein localises to the apical cell membrane. Its subcellular location is the cell membrane. It is found in the cytoplasmic vesicle membrane. The enzyme catalyses H2O(in) = H2O(out). Functionally, aquaporins form homotetrameric transmembrane channels, with each monomer independently mediating water transport across the plasma membrane along its osmotic gradient. Plays an important role in fluid secretion in salivary glands. Required for TRPV4 activation by hypotonicity. Together with TRPV4, controls regulatory volume decrease in salivary epithelial cells. Seems to play a redundant role in water transport in the eye, lung and in sweat glands. This is Aquaporin-5 from Homo sapiens (Human).